A 636-amino-acid polypeptide reads, in one-letter code: 1-deoxy-D-xylulose-5-phosphate synthase (636 aa).

Thiamine diphosphate contacts are provided by residues His-84 and 125–127 (GHS). Residue Asp-156 participates in Mg(2+) binding. Residues 157–158 (GA), Asn-185, Phe-292, and Glu-375 each bind thiamine diphosphate. A Mg(2+)-binding site is contributed by Asn-185.

The protein belongs to the transketolase family. DXPS subfamily. In terms of assembly, homodimer. Requires Mg(2+) as cofactor. The cofactor is thiamine diphosphate.

It catalyses the reaction D-glyceraldehyde 3-phosphate + pyruvate + H(+) = 1-deoxy-D-xylulose 5-phosphate + CO2. It functions in the pathway metabolic intermediate biosynthesis; 1-deoxy-D-xylulose 5-phosphate biosynthesis; 1-deoxy-D-xylulose 5-phosphate from D-glyceraldehyde 3-phosphate and pyruvate: step 1/1. Catalyzes the acyloin condensation reaction between C atoms 2 and 3 of pyruvate and glyceraldehyde 3-phosphate to yield 1-deoxy-D-xylulose-5-phosphate (DXP). This Cellvibrio japonicus (strain Ueda107) (Pseudomonas fluorescens subsp. cellulosa) protein is 1-deoxy-D-xylulose-5-phosphate synthase.